The sequence spans 201 residues: UPF0301 protein CE2927 (201 aa).

This sequence belongs to the UPF0301 (AlgH) family.

The protein is UPF0301 protein CE2927 of Corynebacterium efficiens (strain DSM 44549 / YS-314 / AJ 12310 / JCM 11189 / NBRC 100395).